Reading from the N-terminus, the 416-residue chain is Serine carboxypeptidase S10 family member 1 (416 aa).

The signal sequence occupies residues 1-20 (MMKLLFIIISIIFVINVSNS). N33 and N84 each carry an N-linked (GlcNAc...) asparagine glycan. The active site involves S156. N-linked (GlcNAc...) asparagine glycans are attached at residues N235, N273, and N295. D338 is a catalytic residue. Residue N385 is glycosylated (N-linked (GlcNAc...) asparagine). H396 is an active-site residue.

Belongs to the peptidase S10 family.

It localises to the secreted. Probable carboxypeptidase. This chain is Serine carboxypeptidase S10 family member 1, found in Dictyostelium discoideum (Social amoeba).